The following is a 514-amino-acid chain: 2,3-bisphosphoglycerate-independent phosphoglycerate mutase (514 aa).

2 residues coordinate Mn(2+): Asp14 and Ser64. Residue Ser64 is the Phosphoserine intermediate of the active site. Residues His125, 155-156, Arg187, Arg193, 263-266, and Lys336 contribute to the substrate site; these read RD and RADR. Mn(2+) contacts are provided by Asp403, His407, Asp444, His445, and His463.

It belongs to the BPG-independent phosphoglycerate mutase family. Monomer. It depends on Mn(2+) as a cofactor.

The enzyme catalyses (2R)-2-phosphoglycerate = (2R)-3-phosphoglycerate. It functions in the pathway carbohydrate degradation; glycolysis; pyruvate from D-glyceraldehyde 3-phosphate: step 3/5. Functionally, catalyzes the interconversion of 2-phosphoglycerate and 3-phosphoglycerate. The chain is 2,3-bisphosphoglycerate-independent phosphoglycerate mutase from Salmonella paratyphi A (strain ATCC 9150 / SARB42).